The primary structure comprises 416 residues: Enterobactin exporter EntS (416 aa).

Residues 1–21 (MNKQSWLLNLSLLKTHPAFRA) are Cytoplasmic-facing. A helical transmembrane segment spans residues 22-42 (VFLARFISIVSLGLLGVAVPV). Topologically, residues 43–55 (QIQMMTHSTWQVG) are periplasmic. The helical transmembrane segment at 56-76 (LSVTLTGGAMFVGLMVGGVLA) threads the bilayer. The Cytoplasmic portion of the chain corresponds to 77–83 (DRYERKK). A helical membrane pass occupies residues 84 to 104 (VILLARGTCGIGFIGLCLNAL). Residues 105–109 (LPEPS) lie on the Periplasmic side of the membrane. The chain crosses the membrane as a helical span at residues 110-130 (LLAIYLLGLWDGFFASLGVTA). At 131–156 (LLAATPALVGRENLMQAGAITMLTVR) the chain is on the cytoplasmic side. The chain crosses the membrane as a helical span at residues 157–177 (LGSVISPMIGGLLLATGGVAW). A topological domain (periplasmic) is located at residue asparagine 178. The helical transmembrane segment at 179–199 (YGLAAAGTFITLLPLLSLPAL) threads the bilayer. The Cytoplasmic segment spans residues 200-218 (PPPPQPREHPLKSLLAGFR). The chain crosses the membrane as a helical span at residues 219–239 (FLLASPLVGGIALLGGLLTMA). Residues 240-256 (SAVRVLYPALADNWQMS) lie on the Periplasmic side of the membrane. The helical transmembrane segment at 257–277 (AAQIGFLYAAIPLGAAIGALT) threads the bilayer. Over 278–287 (SGKLAHSVRP) the chain is Cytoplasmic. Residues 288–307 (GLLMLLSTLGAFLAISLFGL) form a helical membrane-spanning segment. Residues 308 to 313 (MPMWIL) lie on the Periplasmic side of the membrane. A helical transmembrane segment spans residues 314–336 (GVVCLALFGWLSAVSSLLQYTML). At 337 to 356 (QTQTPEAMLGRINGLWTAQN) the chain is on the cytoplasmic side. The chain crosses the membrane as a helical span at residues 357 to 377 (VTGDAIGAALLGGLGAMMTPV). Alanine 378 is a topological domain (periplasmic). A helical transmembrane segment spans residues 379 to 399 (SASASGFGLLIIGVLLLLVLV). Residues 400–416 (ELRRFRQTPPQVTASDS) lie on the Cytoplasmic side of the membrane.

It belongs to the major facilitator superfamily. EntS (TC 2.A.1.38) family.

The protein localises to the cell inner membrane. Functionally, component of an export pathway for enterobactin. In Escherichia coli O45:K1 (strain S88 / ExPEC), this protein is Enterobactin exporter EntS.